Here is a 144-residue protein sequence, read N- to C-terminus: Transcriptional regulator MraZ (144 aa).

SpoVT-AbrB domains follow at residues threonine 5 to glutamate 47 and threonine 77 to alanine 120.

It belongs to the MraZ family. Forms oligomers.

It localises to the cytoplasm. The protein localises to the nucleoid. This is Transcriptional regulator MraZ from Mycolicibacterium gilvum (strain PYR-GCK) (Mycobacterium gilvum (strain PYR-GCK)).